Consider the following 245-residue polypeptide: Cell division protein ZapD (245 aa).

It belongs to the ZapD family. Interacts with FtsZ.

Its subcellular location is the cytoplasm. Functionally, cell division factor that enhances FtsZ-ring assembly. Directly interacts with FtsZ and promotes bundling of FtsZ protofilaments, with a reduction in FtsZ GTPase activity. The sequence is that of Cell division protein ZapD from Photobacterium profundum (strain SS9).